A 461-amino-acid chain; its full sequence is Photosynthetic NDH subunit of subcomplex B 1, chloroplastic (461 aa).

A chloroplast-targeting transit peptide spans 1–44 (MASSLPLLPKPISPFFKTPPFSTSKPLVFLNFQTRLTSRSSDVS). The interval 66 to 90 (NEYGSLFADGKQDEDPRPPDNPDNP) is disordered. The segment covering 75 to 85 (GKQDEDPRPPD) has biased composition (basic and acidic residues).

As to quaternary structure, part of the chloroplast NDH complex, composed of a mixture of chloroplast and nucleus encoded subunits. Component of the NDH subcomplex B, at least composed of PnsB1, PnsB2, PnsB3, PnsB4 and PnsB5.

It is found in the plastid. The protein localises to the chloroplast thylakoid membrane. Its function is as follows. NDH shuttles electrons from NAD(P)H:plastoquinone, via FMN and iron-sulfur (Fe-S) centers, to quinones in the photosynthetic chain and possibly in a chloroplast respiratory chain. The immediate electron acceptor for the enzyme in this species is believed to be plastoquinone. Couples the redox reaction to proton translocation, and thus conserves the redox energy in a proton gradient. The polypeptide is Photosynthetic NDH subunit of subcomplex B 1, chloroplastic (Arabidopsis thaliana (Mouse-ear cress)).